The sequence spans 366 residues: Endophilin-B1 (366 aa).

Residues methionine 1–leucine 30 form a membrane-binding amphipathic helix region. The segment at methionine 1–glutamate 37 is required for membrane binding. Residues glutamate 27–serine 261 enclose the BAR domain. Coiled coils occupy residues glutamate 34–glutamine 54 and lysine 160–alanine 185. The 61-residue stretch at serine 306 to asparagine 366 folds into the SH3 domain.

The protein belongs to the endophilin family. In terms of assembly, homodimer, and heterodimer with SH3GLB2. Binds BAX. Binds DNM1, HTT, AMPH, BIN1 and ARFGAP1.

Its subcellular location is the cytoplasm. The protein resides in the golgi apparatus membrane. It is found in the mitochondrion outer membrane. Functionally, may be required for normal outer mitochondrial membrane dynamics. Required for coatomer-mediated retrograde transport in certain cells. May recruit other proteins to membranes with high curvature. May promote membrane fusion. This chain is Endophilin-B1, found in Gallus gallus (Chicken).